Here is a 271-residue protein sequence, read N- to C-terminus: Thiazole synthase (271 aa).

Residue Lys-104 is the Schiff-base intermediate with DXP of the active site. 1-deoxy-D-xylulose 5-phosphate is bound by residues Gly-165, 192 to 193 (AG), and 214 to 215 (NT).

Belongs to the ThiG family. Homotetramer. Forms heterodimers with either ThiH or ThiS.

It is found in the cytoplasm. It catalyses the reaction [ThiS sulfur-carrier protein]-C-terminal-Gly-aminoethanethioate + 2-iminoacetate + 1-deoxy-D-xylulose 5-phosphate = [ThiS sulfur-carrier protein]-C-terminal Gly-Gly + 2-[(2R,5Z)-2-carboxy-4-methylthiazol-5(2H)-ylidene]ethyl phosphate + 2 H2O + H(+). It participates in cofactor biosynthesis; thiamine diphosphate biosynthesis. Functionally, catalyzes the rearrangement of 1-deoxy-D-xylulose 5-phosphate (DXP) to produce the thiazole phosphate moiety of thiamine. Sulfur is provided by the thiocarboxylate moiety of the carrier protein ThiS. In vitro, sulfur can be provided by H(2)S. This is Thiazole synthase from Burkholderia thailandensis (strain ATCC 700388 / DSM 13276 / CCUG 48851 / CIP 106301 / E264).